The sequence spans 364 residues: Paraneoplastic antigen Ma2 homolog (364 aa).

Residue A2 is modified to N-acetylalanine. Residues E335 to D353 show a composition bias toward acidic residues. Positions E335–D364 are disordered.

Belongs to the PNMA family.

It is found in the nucleus. The protein localises to the nucleolus. The protein is Paraneoplastic antigen Ma2 homolog (PNMA2) of Pongo abelii (Sumatran orangutan).